Reading from the N-terminus, the 112-residue chain is Secretoglobin family 2B member 24 (112 aa).

A signal peptide spans 1 to 23 (MKGTLLLLALLMIGELGFHTTEA).

It belongs to the secretoglobin family. As to expression, expressed in lacrimal gland, at higher level in males than females.

Its subcellular location is the secreted. This chain is Secretoglobin family 2B member 24 (Scgb2b24), found in Mus musculus (Mouse).